A 221-amino-acid polypeptide reads, in one-letter code: Adenylate kinase (221 aa).

10 to 15 contributes to the ATP binding site; sequence GAGKGT. Positions 30-59 are NMP; it reads STGDMLRAAVKARTELGVAAKKIMDAGGLV. AMP-binding positions include T31, R36, 57 to 59, 85 to 88, and Q92; these read GLV and GFPR. The tract at residues 122 to 159 is LID; sequence GRRVHLASGRTYHIKFNPPKVEGKDDITGDPLIQRDDD. ATP contacts are provided by residues R123 and 132 to 133; that span reads TY. 2 residues coordinate AMP: R156 and R167. S207 contacts ATP.

This sequence belongs to the adenylate kinase family. As to quaternary structure, monomer.

The protein localises to the cytoplasm. It catalyses the reaction AMP + ATP = 2 ADP. It functions in the pathway purine metabolism; AMP biosynthesis via salvage pathway; AMP from ADP: step 1/1. Catalyzes the reversible transfer of the terminal phosphate group between ATP and AMP. Plays an important role in cellular energy homeostasis and in adenine nucleotide metabolism. This is Adenylate kinase from Polynucleobacter necessarius subsp. necessarius (strain STIR1).